The primary structure comprises 536 residues: MENNREGPYSVLTRDQLKGNMKKQIAEISEIFSLSKPDATVLLMFLRWDSHEVSEFLVENNEKVLSESGLKPVVVDPNQDLYKISSCGICFKTCDDGDYLISTPFCSHMFCKSCWRKYLEKNFYLVEKTQTRISCPHGACQAAVGPDTIQKLTVCDQEMYVEYILRSYIEGNKVLEIKYCPAQDCNYVIEFHQKNHDGADQEDYGFNVVCLCGHIFCWRCMLESHKPVTCNNASDWLFRDLNSLSKESGEKPLSLSSFETREKTYPLSSIKATKKVCPHCLRPADLGTKQYLRFLTCACNGRFCWKCMQPEEAHKTESGFYKFCNVSMTFEGRAPKTLEGRAEPENSCVGLWKASEVSLKQAKSDLQAFEESNIKNPSDLTEKDFTIIRKGLMLIVQCRQVLKWSCVYDYLHAEYEMSKREYLRFLQADATSLVESFSKTLNEEIGRASSATYENFCCVKHKVTIETSNIGNYFYHFIKTLQEGLDDVKVKSYDDYGGLFWLCDRCTYGNTWFHKECLMCSDDIAARVDLSDMSLN.

Residues 83-328 (KISSCGICFK…GFYKFCNVSM (246 aa)) form a TRIAD supradomain region. Zn(2+)-binding residues include cysteine 87, cysteine 90, cysteine 106, histidine 108, cysteine 111, cysteine 114, cysteine 135, cysteine 140, cysteine 180, cysteine 185, cysteine 210, cysteine 212, cysteine 217, cysteine 220, histidine 225, cysteine 230, cysteine 277, cysteine 280, cysteine 297, cysteine 299, cysteine 304, cysteine 307, histidine 314, and cysteine 324. The RING-type 1 zinc-finger motif lies at 87-140 (CGICFKTCDDGDYLISTPFCSHMFCKSCWRKYLEKNFYLVEKTQTRISCPHGAC). The segment at 158-230 (EMYVEYILRS…MLESHKPVTC (73 aa)) adopts an IBR-type zinc-finger fold. The RING-type 2; atypical zinc-finger motif lies at 277 to 307 (CPHCLRPADLGTKQYLRFLTCACNGRFCWKC). The segment at 495 to 526 (DYGGLFWLCDRCTYGNTWFHKECLMCSDDIAA) adopts a RanBP2-type zinc-finger fold.

Belongs to the RBR family. Ariadne subfamily. Zn(2+) is required as a cofactor.

The enzyme catalyses [E2 ubiquitin-conjugating enzyme]-S-ubiquitinyl-L-cysteine + [acceptor protein]-L-lysine = [E2 ubiquitin-conjugating enzyme]-L-cysteine + [acceptor protein]-N(6)-ubiquitinyl-L-lysine.. The protein operates within protein modification; protein ubiquitination. Might act as an E3 ubiquitin-protein ligase, or as part of E3 complex, which accepts ubiquitin from specific E2 ubiquitin-conjugating enzymes and then transfers it to substrates. This is Probable E3 ubiquitin-protein ligase ARI13 (ARI13) from Arabidopsis thaliana (Mouse-ear cress).